Here is a 159-residue protein sequence, read N- to C-terminus: Aspartate carbamoyltransferase regulatory chain (159 aa).

Zn(2+) is bound by residues cysteine 113, cysteine 118, cysteine 143, and cysteine 146.

The protein belongs to the PyrI family. As to quaternary structure, contains catalytic and regulatory chains. Requires Zn(2+) as cofactor.

Its function is as follows. Involved in allosteric regulation of aspartate carbamoyltransferase. The sequence is that of Aspartate carbamoyltransferase regulatory chain from Methanococcoides burtonii (strain DSM 6242 / NBRC 107633 / OCM 468 / ACE-M).